The chain runs to 85 residues: Homeobox protein knotted-1-like 5 (85 aa).

An ELK domain is found at Glu-1–Phe-21. The segment at residues Leu-22–Ser-85 is a DNA-binding region (homeobox; TALE-type).

Belongs to the TALE/KNOX homeobox family. In terms of tissue distribution, strongly expressed in ear inflorescence primordia and shoot meristem. Weakly expressed in embryos. Absent from leaves.

The protein resides in the nucleus. Its function is as follows. Probably binds to the DNA sequence 5'-TGAC-3'. The protein is Homeobox protein knotted-1-like 5 (KNOX5) of Zea mays (Maize).